We begin with the raw amino-acid sequence, 96 residues long: uncharacterized protein (96 aa).

Positions M1–A21 are cleaved as a signal peptide.

This is an uncharacterized protein from Archaeoglobus fulgidus (strain ATCC 49558 / DSM 4304 / JCM 9628 / NBRC 100126 / VC-16).